A 150-amino-acid polypeptide reads, in one-letter code: FAD synthase (150 aa).

ATP-binding positions include Thr-11–Phe-12, His-16–His-19, Asp-96, and Tyr-124.

It belongs to the archaeal FAD synthase family. As to quaternary structure, homodimer. It depends on a divalent metal cation as a cofactor.

It carries out the reaction FMN + ATP + H(+) = FAD + diphosphate. Its pathway is cofactor biosynthesis; FAD biosynthesis; FAD from FMN: step 1/1. Functionally, catalyzes the transfer of the AMP portion of ATP to flavin mononucleotide (FMN) to produce flavin adenine dinucleotide (FAD) coenzyme. This Methanococcus maripaludis (strain C7 / ATCC BAA-1331) protein is FAD synthase.